A 42-amino-acid polypeptide reads, in one-letter code: Envelope protein P10 (42 aa).

A helical membrane pass occupies residues 20 to 40; it reads TTAAKIAVVYALVGLVGGLLL.

The protein localises to the virion membrane. Its function is as follows. Involved in cell lysis. This is Envelope protein P10 (P10) from Pseudomonas savastanoi pv. phaseolicola (Pseudomonas syringae pv. phaseolicola).